A 118-amino-acid chain; its full sequence is UPF0342 protein BAMEG_3696 (118 aa).

Belongs to the UPF0342 family.

The protein is UPF0342 protein BAMEG_3696 of Bacillus anthracis (strain CDC 684 / NRRL 3495).